We begin with the raw amino-acid sequence, 150 residues long: UPF0201 protein APE_1751 (150 aa).

The protein belongs to the UPF0201 family.

This is UPF0201 protein APE_1751 from Aeropyrum pernix (strain ATCC 700893 / DSM 11879 / JCM 9820 / NBRC 100138 / K1).